A 39-amino-acid polypeptide reads, in one-letter code: Potassium channel toxin alpha-KTx 2.23 (39 aa).

Intrachain disulfides connect Cys-7–Cys-29, Cys-13–Cys-34, and Cys-17–Cys-36.

In terms of tissue distribution, expressed by the venom gland.

Its subcellular location is the secreted. In terms of biological role, blocks human voltage-gated potassium (Kv) channels Kv1.1/KCNA1, Kv1.2/KCNA2 and Kv1.3/KCNA3. In Centruroides bonito (Scorpion), this protein is Potassium channel toxin alpha-KTx 2.23.